The sequence spans 1820 residues: uncharacterized protein (1820 aa).

Disordered stretches follow at residues 1–73, 86–158, 226–260, 286–366, 453–497, 519–548, 577–597, 619–689, and 735–830; these read MQWT…TLSG, TTTT…VRSA, GSSG…NNNY, EERA…QETE, DVQD…RNLS, LSSI…TDTA, GNSS…PPTP, GAGT…TASG, and HSHN…TPSS. The segment covering 20–31 has biased composition (polar residues); it reads NRNSIEQRTPAN. A compositionally biased stretch (low complexity) spans 86–128; the sequence is TTTTTIIESSSSTNTTLEKNSPSPAGGSCSSGSGSLSPAYLQH. Residues 129 to 146 show a composition bias toward basic residues; that stretch reads HLQHHGSPLHHLQVHHHT. Residues 247–259 show a composition bias toward low complexity; that stretch reads SNSSNCSSQFNNN. A coiled-coil region spans residues 265–308; sequence VDSLDDMLRKLTELEQRVIEAEERAEEAEDKVRAMEQRLSEWPK. Residues 294-305 show a composition bias toward basic and acidic residues; sequence DKVRAMEQRLSE. Residues 346–358 show a composition bias toward low complexity; that stretch reads ASGGATAGAAGSG. Positions 362–438 form a coiled coil; it reads TQETEKTITS…LKNHIANQSQ (77 aa). The segment covering 453–463 has biased composition (polar residues); sequence DVQDFTGSGSN. Phosphoserine is present on residues serine 542 and serine 543. The segment covering 623–632 has biased composition (low complexity); the sequence is GTSTAESTAS. Positions 655–669 are enriched in gly residues; it reads HGSGTGIGTGDGHGT. A compositionally biased stretch (low complexity) spans 738 to 769; sequence NSSSTDNTETSTSGSASSPSKSLKTSSSLSPA. The segment covering 787 to 818 has biased composition (polar residues); it reads QSRTSTTPSSRINQHLQPSQHQHHTLSNQNHG. PH domains lie at 909 to 1003 and 1017 to 1124; these read SLEK…NVQR and KPTV…VVSG. 3 positions are modified to phosphoserine: serine 1073, serine 1075, and serine 1077. The region spanning 1159–1378 is the MyTH4 domain; the sequence is HTKDTITAPL…PSRMEVLSIL (220 aa). The FERM domain maps to 1389–1712; that stretch reads HAIPVHMMNS…DYMNALGHTV (324 aa). Disordered regions lie at residues 1713-1748 and 1764-1820; these read PGTP…ATGF and ATHT…QRIK. The segment covering 1714-1724 has biased composition (polar residues); sequence GTPQMNSLTRN. Low complexity predominate over residues 1764-1781; the sequence is ATHTLNSNHSHTLSSSHH. The span at 1805-1820 shows a compositional bias: basic and acidic residues; sequence HQPDILKSTPDHQRIK.

This is an uncharacterized protein from Drosophila melanogaster (Fruit fly).